A 353-amino-acid chain; its full sequence is Phospho-N-acetylmuramoyl-pentapeptide-transferase (353 aa).

10 helical membrane passes run 16–36 (YISV…MYLM), 64–84 (AGTP…ATVL), 88–108 (LNNF…LIGI), 130–150 (LIFQ…YGHS), 160–180 (FPLF…IVGS), 198–218 (SILA…AVFA), 228–248 (IAGE…AFLW), 256–276 (VFMG…LAIV), 281–301 (ILLL…ILQV), and 330–350 (KIIV…LLSL).

This sequence belongs to the glycosyltransferase 4 family. MraY subfamily. Requires Mg(2+) as cofactor.

The protein localises to the cell inner membrane. It catalyses the reaction UDP-N-acetyl-alpha-D-muramoyl-L-alanyl-gamma-D-glutamyl-meso-2,6-diaminopimeloyl-D-alanyl-D-alanine + di-trans,octa-cis-undecaprenyl phosphate = di-trans,octa-cis-undecaprenyl diphospho-N-acetyl-alpha-D-muramoyl-L-alanyl-D-glutamyl-meso-2,6-diaminopimeloyl-D-alanyl-D-alanine + UMP. It participates in cell wall biogenesis; peptidoglycan biosynthesis. Functionally, catalyzes the initial step of the lipid cycle reactions in the biosynthesis of the cell wall peptidoglycan: transfers peptidoglycan precursor phospho-MurNAc-pentapeptide from UDP-MurNAc-pentapeptide onto the lipid carrier undecaprenyl phosphate, yielding undecaprenyl-pyrophosphoryl-MurNAc-pentapeptide, known as lipid I. The chain is Phospho-N-acetylmuramoyl-pentapeptide-transferase from Aliarcobacter butzleri (strain RM4018) (Arcobacter butzleri).